We begin with the raw amino-acid sequence, 533 residues long: NEDD8-activating enzyme E1 regulatory subunit (533 aa).

An interaction with uba3 region spans residues 330–343; that stretch reads DMIADSDKFIKLQN.

The protein belongs to the ubiquitin-activating E1 family. ULA1 subfamily. In terms of assembly, heterodimer of uba3 and nae1. The complex binds nedd8 and ube2m.

It participates in protein modification; protein neddylation. Functionally, regulatory subunit of the dimeric uba3-nae1 E1 enzyme. E1 activates nedd8 by first adenylating its C-terminal glycine residue with ATP, thereafter linking this residue to the side chain of the catalytic cysteine, yielding a nedd8-uba3 thioester and free AMP. E1 finally transfers nedd8 to the catalytic cysteine of ube2m. The covalent attachment of nedd8 to target proteins is known as 'neddylation' and the process is involved in the regulation of cell growth, viability and development. This is NEDD8-activating enzyme E1 regulatory subunit (nae1) from Xenopus laevis (African clawed frog).